The sequence spans 325 residues: Transaldolase (325 aa).

K125 (schiff-base intermediate with substrate) is an active-site residue.

Belongs to the transaldolase family. Type 2 subfamily.

It is found in the cytoplasm. It carries out the reaction D-sedoheptulose 7-phosphate + D-glyceraldehyde 3-phosphate = D-erythrose 4-phosphate + beta-D-fructose 6-phosphate. The protein operates within carbohydrate degradation; pentose phosphate pathway; D-glyceraldehyde 3-phosphate and beta-D-fructose 6-phosphate from D-ribose 5-phosphate and D-xylulose 5-phosphate (non-oxidative stage): step 2/3. Transaldolase is important for the balance of metabolites in the pentose-phosphate pathway. The chain is Transaldolase from Campylobacter jejuni subsp. jejuni serotype O:23/36 (strain 81-176).